The chain runs to 227 residues: Lipoprotein-releasing system ATP-binding protein LolD (227 aa).

In terms of domain architecture, ABC transporter spans 7–227 (LSCRDLGKSY…HLQEGHLVAI (221 aa)). 43-50 (GTSGSGKS) serves as a coordination point for ATP.

The protein belongs to the ABC transporter superfamily. Lipoprotein translocase (TC 3.A.1.125) family. As to quaternary structure, the complex is composed of two ATP-binding proteins (LolD) and two transmembrane proteins (LolC and LolE).

It is found in the cell inner membrane. Its function is as follows. Part of the ABC transporter complex LolCDE involved in the translocation of mature outer membrane-directed lipoproteins, from the inner membrane to the periplasmic chaperone, LolA. Responsible for the formation of the LolA-lipoprotein complex in an ATP-dependent manner. In Pseudomonas fluorescens (strain ATCC BAA-477 / NRRL B-23932 / Pf-5), this protein is Lipoprotein-releasing system ATP-binding protein LolD.